Consider the following 508-residue polypeptide: Glycerol kinase (508 aa).

Residue threonine 14 coordinates ADP. Residues threonine 14, threonine 15, and serine 16 each coordinate ATP. Threonine 14 contacts sn-glycerol 3-phosphate. Arginine 18 is an ADP binding site. Residues arginine 84, glutamate 85, and tyrosine 136 each coordinate sn-glycerol 3-phosphate. Residues arginine 84, glutamate 85, and tyrosine 136 each contribute to the glycerol site. Histidine 232 is modified (phosphohistidine; by HPr). Aspartate 246 serves as a coordination point for sn-glycerol 3-phosphate. Glycerol contacts are provided by aspartate 246 and glutamine 247. Positions 268 and 311 each coordinate ADP. The ATP site is built by threonine 268, glycine 311, glutamine 315, and glycine 412. ADP is bound by residues glycine 412 and asparagine 416.

This sequence belongs to the FGGY kinase family. In terms of assembly, homotetramer and homodimer (in equilibrium). The phosphoenolpyruvate-dependent sugar phosphotransferase system (PTS), including enzyme I, and histidine-containing protein (HPr) are required for the phosphorylation, which leads to the activation of the enzyme.

It catalyses the reaction glycerol + ATP = sn-glycerol 3-phosphate + ADP + H(+). Its pathway is polyol metabolism; glycerol degradation via glycerol kinase pathway; sn-glycerol 3-phosphate from glycerol: step 1/1. Activated by phosphorylation and inhibited by fructose 1,6-bisphosphate (FBP). In terms of biological role, key enzyme in the regulation of glycerol uptake and metabolism. Catalyzes the phosphorylation of glycerol to yield sn-glycerol 3-phosphate. The sequence is that of Glycerol kinase from Streptococcus pyogenes serotype M12 (strain MGAS2096).